A 586-amino-acid chain; its full sequence is MNLLVTSSLGVLLHLVVLCQADDHSELLVNTKSGKVMGTRVPVLSSHISAFLGIPFAEPPVGNMRFRRPEPKKPWSGVWNASTYPNNCQQYVDEQFPGFSGSEMWNPNREMSEDCLYLNIWVPSPRPKSTTVMVWIYGGGFYSGSSTLDVYNGKYLAYTEEVVLVSLSYRVGAFGFLALHGSQEAPGNVGLLDQRMALQWVHDNIQFFGGDPKTVTIFGESAGGASVGMHILSPGSRDLFRRAILQSGSPNCPWASVSVAEGRRRAVELGRNLNCNLNSDEELIHCLREKKPQELIDVEWNVLPFDSIFRFSFVPVIDGEFFPTSLESMLNSGNFKKTQILLGVNKDEGSFFLLYGAPGFSKDSESKISREDFMSGVKLSVPHANDLGLDAVTLQYTDWMDDNNGIKNRDGLDDIVGDHNVICPLMHFVNKYTKFGNGTYLYFFNHRASNLVWPEWMGVIHGYEIEFVFGLPLVKELNYTAEEEALSRRIMHYWATFAKTGNPNEPHSQESKWPLFTTKEQKFIDLNTEPMKVHQRLRVQMCVFWNQFLPKLLNATACDGELSSSGTSSSKGIIFYVLFSILYLIF.

An N-terminal signal peptide occupies residues 1-21 (MNLLVTSSLGVLLHLVVLCQA). N-linked (GlcNAc...) asparagine glycosylation occurs at Asn80. Cys88 and Cys115 are oxidised to a cystine. Ser221 (acyl-ester intermediate) is an active-site residue. A disulfide bridge connects residues Cys275 and Cys286. Glu348 functions as the Charge relay system in the catalytic mechanism. The cysteines at positions 423 and 542 are disulfide-linked. N-linked (GlcNAc...) asparagine glycosylation is present at Asn437. His461 functions as the Charge relay system in the catalytic mechanism. N-linked (GlcNAc...) asparagine glycosylation is found at Asn478 and Asn554. Residue Ser564 is the site of GPI-anchor amidated serine attachment. A propeptide spans 565–586 (SGTSSSKGIIFYVLFSILYLIF) (removed in mature form).

The protein belongs to the type-B carboxylesterase/lipase family. As to quaternary structure, isoform H form is a homodimer; the asymmetric form is a disulfide-bonded oligomer composed of a collagenic subunit (Q) and a variable number of T catalytic subunits. In terms of processing, an interchain disulfide bond is present in what becomes position 593 of the T isoform. In terms of tissue distribution, found in the synapses and to a lower extent in extrajunctional areas of muscle and nerve, and on erythrocyte membranes.

The protein resides in the cell membrane. Its subcellular location is the synapse. The enzyme catalyses acetylcholine + H2O = choline + acetate + H(+). Inhibited by substrate concentrations above 0.5 mM. Its function is as follows. Terminates signal transduction at the neuromuscular junction by rapid hydrolysis of the acetylcholine released into the synaptic cleft. May be involved in cell-cell interactions. In Tetronarce californica (Pacific electric ray), this protein is Acetylcholinesterase (ache).